The chain runs to 139 residues: D-ribose pyranase (139 aa).

The active-site Proton donor is the histidine 20. Residues aspartate 28, histidine 106, and 128-130 contribute to the substrate site; that span reads YAN.

This sequence belongs to the RbsD / FucU family. RbsD subfamily. In terms of assembly, homodecamer.

Its subcellular location is the cytoplasm. The enzyme catalyses beta-D-ribopyranose = beta-D-ribofuranose. Its pathway is carbohydrate metabolism; D-ribose degradation; D-ribose 5-phosphate from beta-D-ribopyranose: step 1/2. Its function is as follows. Catalyzes the interconversion of beta-pyran and beta-furan forms of D-ribose. The chain is D-ribose pyranase from Vibrio cholerae serotype O1 (strain ATCC 39541 / Classical Ogawa 395 / O395).